Reading from the N-terminus, the 64-residue chain is DNA gyrase inhibitor YacG (64 aa).

Zn(2+)-binding residues include cysteine 9, cysteine 12, cysteine 28, and cysteine 32. Residues 45–64 (KRIPSSGDLSESDDWSEEPK) form a disordered region. Residues 54 to 64 (SESDDWSEEPK) are compositionally biased toward acidic residues.

Belongs to the DNA gyrase inhibitor YacG family. In terms of assembly, interacts with GyrB. Zn(2+) serves as cofactor.

In terms of biological role, inhibits all the catalytic activities of DNA gyrase by preventing its interaction with DNA. Acts by binding directly to the C-terminal domain of GyrB, which probably disrupts DNA binding by the gyrase. This chain is DNA gyrase inhibitor YacG, found in Escherichia fergusonii (strain ATCC 35469 / DSM 13698 / CCUG 18766 / IAM 14443 / JCM 21226 / LMG 7866 / NBRC 102419 / NCTC 12128 / CDC 0568-73).